Consider the following 536-residue polypeptide: uncharacterized protein (536 aa).

2 disordered regions span residues 1–76 (MSFT…SPAS) and 204–237 (NWNSSSSFTSSTSSTPISSSYSSSGTLPSKSNKS). Composition is skewed to low complexity over residues 7–76 (TSSV…SPAS) and 204–234 (NWNSSSSFTSSTSSTPISSSYSSSGTLPSKS). The chain crosses the membrane as a helical span at residues 247-267 (CSVAIPVGVVLILIGLGIFLW). Disordered stretches follow at residues 287–354 (YGFN…LLGG) and 373–536 (DASD…LNLF). Residues 290 to 326 (NPNQPSNFRSPNRAPSTNNRYRGWNGSPTPAAGNNTN) are compositionally biased toward polar residues. Low complexity predominate over residues 327 to 350 (GRPVAPRPSAGAGGANPPAASQPG). A helical transmembrane segment spans residues 351–371 (LLGGSSNSAGPIAAATAAGVG). Residues 403–424 (SASNEAEATMPPSNGSNFSEGL) are compositionally biased toward polar residues. The segment covering 430 to 454 (ESGPAVGAAGAAAEAAEHSGSGSDS) has biased composition (low complexity). Residues 480 to 509 (SYGSRAALSSRSQSNLLSPTSTGASNQPNY) show a composition bias toward polar residues. Residues 517–527 (SSSNVSIPRSS) show a composition bias toward low complexity.

It is found in the membrane. This is an uncharacterized protein from Schizosaccharomyces pombe (strain 972 / ATCC 24843) (Fission yeast).